A 338-amino-acid chain; its full sequence is Tagatose 1,6-diphosphate aldolase (338 aa).

It belongs to the aldolase LacD family.

The enzyme catalyses D-tagatofuranose 1,6-bisphosphate = D-glyceraldehyde 3-phosphate + dihydroxyacetone phosphate. It participates in carbohydrate metabolism; D-tagatose 6-phosphate degradation; D-glyceraldehyde 3-phosphate and glycerone phosphate from D-tagatose 6-phosphate: step 2/2. This is Tagatose 1,6-diphosphate aldolase from Listeria monocytogenes serovar 1/2a (strain ATCC BAA-679 / EGD-e).